Consider the following 62-residue polypeptide: Large ribosomal subunit protein bL28 (62 aa).

It belongs to the bacterial ribosomal protein bL28 family.

The chain is Large ribosomal subunit protein bL28 from Streptococcus thermophilus (strain CNRZ 1066).